Here is a 513-residue protein sequence, read N- to C-terminus: GMP synthase [glutamine-hydrolyzing] (513 aa).

The Glutamine amidotransferase type-1 domain maps to 9-198 (LILVLDFGSQ…VRRVCNCTGE (190 aa)). Cysteine 86 functions as the Nucleophile in the catalytic mechanism. Catalysis depends on residues histidine 172 and glutamate 174. The GMPS ATP-PPase domain occupies 199-388 (WTMENFIEIE…LGIPEHLVWR (190 aa)). 226-232 (SGGVDSS) contributes to the ATP binding site.

Homodimer.

It catalyses the reaction XMP + L-glutamine + ATP + H2O = GMP + L-glutamate + AMP + diphosphate + 2 H(+). It participates in purine metabolism; GMP biosynthesis; GMP from XMP (L-Gln route): step 1/1. Functionally, catalyzes the synthesis of GMP from XMP. The polypeptide is GMP synthase [glutamine-hydrolyzing] (Staphylococcus epidermidis (strain ATCC 12228 / FDA PCI 1200)).